The primary structure comprises 242 residues: MANPDTIFSAPIDKIGDFTFDERVAEVFPDMIQRSIPGYSNIISAIGMLAERYAKPHSSVYDLGCSLGAATLSMRRHINQEGCQIIGVDNSSAMVERCRLLINAYRSDTPVTIVEADIRDVNIQDASVVVLNFTLQFLVPADRRALLEKIYSGLRPGGILILSEKYIFEDGVVNELLIDLHHDFKRANGYSELEISQKRSAIENVMLPDPIDVHKQRFQEIGFKSSEVWFQCFNFGSMFAIK.

Residues tyrosine 39, glycine 64–serine 66, aspartate 89–asparagine 90, aspartate 117–isoleucine 118, asparagine 132, and arginine 199 each bind S-adenosyl-L-methionine.

The protein belongs to the class I-like SAM-binding methyltransferase superfamily. Cx-SAM synthase family. As to quaternary structure, homodimer.

The enzyme catalyses prephenate + S-adenosyl-L-methionine = carboxy-S-adenosyl-L-methionine + 3-phenylpyruvate + H2O. In terms of biological role, catalyzes the conversion of S-adenosyl-L-methionine (SAM) to carboxy-S-adenosyl-L-methionine (Cx-SAM). This Aliivibrio salmonicida (strain LFI1238) (Vibrio salmonicida (strain LFI1238)) protein is Carboxy-S-adenosyl-L-methionine synthase.